The chain runs to 361 residues: Phosphoserine aminotransferase (361 aa).

L-glutamate is bound at residue Arg42. Residues Ala76–Arg77, Trp102, Thr153, Asp173, and Gln196 contribute to the pyridoxal 5'-phosphate site. The residue at position 197 (Lys197) is an N6-(pyridoxal phosphate)lysine. Position 238–239 (Asn238–Thr239) interacts with pyridoxal 5'-phosphate.

The protein belongs to the class-V pyridoxal-phosphate-dependent aminotransferase family. SerC subfamily. As to quaternary structure, homodimer. It depends on pyridoxal 5'-phosphate as a cofactor.

The protein resides in the cytoplasm. The enzyme catalyses O-phospho-L-serine + 2-oxoglutarate = 3-phosphooxypyruvate + L-glutamate. The catalysed reaction is 4-(phosphooxy)-L-threonine + 2-oxoglutarate = (R)-3-hydroxy-2-oxo-4-phosphooxybutanoate + L-glutamate. It participates in amino-acid biosynthesis; L-serine biosynthesis; L-serine from 3-phospho-D-glycerate: step 2/3. The protein operates within cofactor biosynthesis; pyridoxine 5'-phosphate biosynthesis; pyridoxine 5'-phosphate from D-erythrose 4-phosphate: step 3/5. Catalyzes the reversible conversion of 3-phosphohydroxypyruvate to phosphoserine and of 3-hydroxy-2-oxo-4-phosphonooxybutanoate to phosphohydroxythreonine. The sequence is that of Phosphoserine aminotransferase from Pectobacterium carotovorum subsp. carotovorum (strain PC1).